We begin with the raw amino-acid sequence, 421 residues long: UDP-N-acetylglucosamine 1-carboxyvinyltransferase (421 aa).

Lys22–Asn23 is a phosphoenolpyruvate binding site. Arg92 is a UDP-N-acetyl-alpha-D-glucosamine binding site. The active-site Proton donor is Cys116. Cys116 carries the 2-(S-cysteinyl)pyruvic acid O-phosphothioketal modification. 2 residues coordinate UDP-N-acetyl-alpha-D-glucosamine: Asp307 and Val329.

This sequence belongs to the EPSP synthase family. MurA subfamily.

Its subcellular location is the cytoplasm. The enzyme catalyses phosphoenolpyruvate + UDP-N-acetyl-alpha-D-glucosamine = UDP-N-acetyl-3-O-(1-carboxyvinyl)-alpha-D-glucosamine + phosphate. It functions in the pathway cell wall biogenesis; peptidoglycan biosynthesis. Cell wall formation. Adds enolpyruvyl to UDP-N-acetylglucosamine. This chain is UDP-N-acetylglucosamine 1-carboxyvinyltransferase, found in Kosmotoga olearia (strain ATCC BAA-1733 / DSM 21960 / TBF 19.5.1).